The primary structure comprises 371 residues: NDMA-dependent alcohol dehydrogenase (371 aa).

The Zn(2+) site is built by C40, H61, C91, C94, C97, C105, and C167.

This sequence belongs to the zinc-containing alcohol dehydrogenase family. As to quaternary structure, homotrimer. It depends on NADH as a cofactor.

It catalyses the reaction N,N-dimethyl-4-nitrosoaniline + a primary alcohol = 4-(hydroxylamino)-N,N-dimethylaniline + an aldehyde. It carries out the reaction ethanol + A = acetaldehyde + AH2. Its activity is regulated as follows. Inhibited by trans-4-(N,N-dimethylamino)-cinnamaldehyde through direct binding to the catalytic zinc ion in a substrate-like geometry. Isobutyramide acts as a competitive inhibitor with respect to the electron acceptor NDMA. Acetaldehyde, AMP, ADP, ATP, as well as CuSO(4), FeSO(4), HgCl(2), NiCl(2), ZnSO(4), KCN, and NaN(3) are additional inhibitors of the catalytic activity. Catalytically different from common alcohol dehydrogenases. Effective in oxidizing ethanol, other primary alcohols and benzylalcohol only in the presence of p-nitroso-N,N-dimethylaniline (NDMA) as an electron acceptor. NADH acts as a cofactor here instead as a coenzyme. This chain is NDMA-dependent alcohol dehydrogenase, found in Amycolatopsis methanolica.